Consider the following 282-residue polypeptide: Bifunctional protein FolD (282 aa).

NADP(+)-binding positions include 165–167 and Ile231; that span reads GAS.

Belongs to the tetrahydrofolate dehydrogenase/cyclohydrolase family. Homodimer.

The enzyme catalyses (6R)-5,10-methylene-5,6,7,8-tetrahydrofolate + NADP(+) = (6R)-5,10-methenyltetrahydrofolate + NADPH. The catalysed reaction is (6R)-5,10-methenyltetrahydrofolate + H2O = (6R)-10-formyltetrahydrofolate + H(+). Its pathway is one-carbon metabolism; tetrahydrofolate interconversion. In terms of biological role, catalyzes the oxidation of 5,10-methylenetetrahydrofolate to 5,10-methenyltetrahydrofolate and then the hydrolysis of 5,10-methenyltetrahydrofolate to 10-formyltetrahydrofolate. The chain is Bifunctional protein FolD from Francisella tularensis subsp. novicida (strain U112).